The primary structure comprises 273 residues: Large ribosomal subunit protein uL2 (273 aa).

Positions 221–263 are disordered; the sequence is RGTAMNPVDHPHGGGEGRNFGKHPVTPWGVQTKGKKTRHNKRT. The span at 253–263 shows a compositional bias: basic residues; that stretch reads KGKKTRHNKRT.

It belongs to the universal ribosomal protein uL2 family. Part of the 50S ribosomal subunit. Forms a bridge to the 30S subunit in the 70S ribosome.

One of the primary rRNA binding proteins. Required for association of the 30S and 50S subunits to form the 70S ribosome, for tRNA binding and peptide bond formation. It has been suggested to have peptidyltransferase activity; this is somewhat controversial. Makes several contacts with the 16S rRNA in the 70S ribosome. This is Large ribosomal subunit protein uL2 from Actinobacillus succinogenes (strain ATCC 55618 / DSM 22257 / CCUG 43843 / 130Z).